Here is a 268-residue protein sequence, read N- to C-terminus: uncharacterized protein (268 aa).

Transmembrane regions (helical) follow at residues 32-52 (SLLL…IFFI), 70-90 (VFVG…AFLF), 125-145 (GVSS…FYIF), and 237-257 (IKYI…AYLT).

This sequence belongs to the CbiQ family.

The protein resides in the cell membrane. This is an uncharacterized protein from Methanocaldococcus jannaschii (strain ATCC 43067 / DSM 2661 / JAL-1 / JCM 10045 / NBRC 100440) (Methanococcus jannaschii).